The sequence spans 445 residues: tRNA-2-methylthio-N(6)-dimethylallyladenosine synthase (445 aa).

One can recognise an MTTase N-terminal domain in the interval 3 to 124 (KKLYIKTYGC…LPELISKVVR (122 aa)). Residues C12, C48, C87, C162, C166, and C169 each contribute to the [4Fe-4S] cluster site. The Radical SAM core domain occupies 148-380 (YTQGASSFIS…QKELATQQLA (233 aa)). The TRAM domain occupies 383 to 445 (ESCVGSTMKV…ALNSLTGEIL (63 aa)).

It belongs to the methylthiotransferase family. MiaB subfamily. In terms of assembly, monomer. It depends on [4Fe-4S] cluster as a cofactor.

It is found in the cytoplasm. It catalyses the reaction N(6)-dimethylallyladenosine(37) in tRNA + (sulfur carrier)-SH + AH2 + 2 S-adenosyl-L-methionine = 2-methylsulfanyl-N(6)-dimethylallyladenosine(37) in tRNA + (sulfur carrier)-H + 5'-deoxyadenosine + L-methionine + A + S-adenosyl-L-homocysteine + 2 H(+). Functionally, catalyzes the methylthiolation of N6-(dimethylallyl)adenosine (i(6)A), leading to the formation of 2-methylthio-N6-(dimethylallyl)adenosine (ms(2)i(6)A) at position 37 in tRNAs that read codons beginning with uridine. The polypeptide is tRNA-2-methylthio-N(6)-dimethylallyladenosine synthase (Rickettsia typhi (strain ATCC VR-144 / Wilmington)).